A 153-amino-acid polypeptide reads, in one-letter code: uncharacterized protein (153 aa).

This is an uncharacterized protein from Ureaplasma parvum serovar 3 (strain ATCC 700970).